A 70-amino-acid chain; its full sequence is Protein SlyX homolog (70 aa).

This sequence belongs to the SlyX family.

The protein is Protein SlyX homolog of Agrobacterium fabrum (strain C58 / ATCC 33970) (Agrobacterium tumefaciens (strain C58)).